Reading from the N-terminus, the 346-residue chain is uncharacterized protein (346 aa).

It belongs to the IIV-6 359L family.

This is an uncharacterized protein from Invertebrate iridescent virus 6 (IIV-6).